The following is a 159-amino-acid chain: Phosphopantetheine adenylyltransferase (159 aa).

Thr10 provides a ligand contact to substrate. ATP is bound by residues 10–11 and His18; that span reads TF. Substrate is bound by residues Lys42, Met74, and Arg88. Residues 89 to 91, Glu99, and 124 to 130 contribute to the ATP site; these read GLR and WSFISSS.

It belongs to the bacterial CoaD family. As to quaternary structure, homohexamer. Mg(2+) is required as a cofactor.

The protein resides in the cytoplasm. It carries out the reaction (R)-4'-phosphopantetheine + ATP + H(+) = 3'-dephospho-CoA + diphosphate. It participates in cofactor biosynthesis; coenzyme A biosynthesis; CoA from (R)-pantothenate: step 4/5. In terms of biological role, reversibly transfers an adenylyl group from ATP to 4'-phosphopantetheine, yielding dephospho-CoA (dPCoA) and pyrophosphate. This is Phosphopantetheine adenylyltransferase from Yersinia pseudotuberculosis serotype I (strain IP32953).